The following is a 212-amino-acid chain: Large ribosomal subunit protein uL3 (212 aa).

Residues 130–155 (KRGNMTHGSKNHRLPGSTGAGTTPGR) are disordered.

It belongs to the universal ribosomal protein uL3 family. As to quaternary structure, part of the 50S ribosomal subunit. Forms a cluster with proteins L14 and L19.

In terms of biological role, one of the primary rRNA binding proteins, it binds directly near the 3'-end of the 23S rRNA, where it nucleates assembly of the 50S subunit. The sequence is that of Large ribosomal subunit protein uL3 from Rippkaea orientalis (strain PCC 8801 / RF-1) (Cyanothece sp. (strain PCC 8801)).